The sequence spans 263 residues: Shikimate dehydrogenase (NADP(+)) (263 aa).

Shikimate contacts are provided by residues 16 to 18 (SKS) and threonine 65. Lysine 69 functions as the Proton acceptor in the catalytic mechanism. Shikimate is bound by residues asparagine 90 and aspartate 105. NADP(+)-binding positions include 125–129 (GSGGS) and leucine 208. Tyrosine 210 lines the shikimate pocket. Glycine 230 provides a ligand contact to NADP(+).

This sequence belongs to the shikimate dehydrogenase family. As to quaternary structure, homodimer.

It catalyses the reaction shikimate + NADP(+) = 3-dehydroshikimate + NADPH + H(+). Its pathway is metabolic intermediate biosynthesis; chorismate biosynthesis; chorismate from D-erythrose 4-phosphate and phosphoenolpyruvate: step 4/7. In terms of biological role, involved in the biosynthesis of the chorismate, which leads to the biosynthesis of aromatic amino acids. Catalyzes the reversible NADPH linked reduction of 3-dehydroshikimate (DHSA) to yield shikimate (SA). The polypeptide is Shikimate dehydrogenase (NADP(+)) (Helicobacter pylori (strain P12)).